A 28-amino-acid polypeptide reads, in one-letter code: Cliotide T21 (28 aa).

The cyclopeptide (Asp-Asn) cross-link spans 1–28; sequence DLQCAETCVHSPCIGPCYCKHGLICYRN. Disulfide bonds link cysteine 4–cysteine 17, cysteine 8–cysteine 19, and cysteine 13–cysteine 25.

Contains 3 disulfide bonds. Post-translationally, this is a cyclic peptide. As to expression, expressed in root nodules but not in seed.

Functionally, probably participates in a plant defense mechanism. Not active against Gram-negative bacterium E.coli ATCC 700926 or Gram-positive bacterium S.aureus ATCC 12600 up to a concentration of 100 uM under low-salt conditions. The chain is Cliotide T21 from Clitoria ternatea (Butterfly pea).